A 256-amino-acid polypeptide reads, in one-letter code: Reaction center protein M chain (256 aa).

Transmembrane regions (helical) follow at residues 52 to 78 (PGVA…LASV), 110 to 139 (EGGW…ARAL), and 142 to 167 (GTHM…PLLL). 2 residues coordinate (7R,8Z)-bacteriochlorophyll b: histidine 181 and histidine 201. Residues 197 to 225 (YNPFHMLSIAFLYGSAVLFAMHGATILAV) traverse the membrane as a helical segment. Residues histidine 218 and glutamate 233 each contribute to the Fe cation site. Position 251 (tryptophan 251) interacts with a ubiquinone.

It belongs to the reaction center PufL/M/PsbA/D family. In terms of assembly, reaction center is composed of four bacteriochlorophylls, two bacteriopheophytins, two ubiquinones, one iron, and two highly hydrophobic polypeptide chains (designated L and M).

Its subcellular location is the cellular chromatophore membrane. Its function is as follows. The reaction center is a membrane-bound complex that mediates the initial photochemical event in the electron transfer process of photosynthesis. In Pararhodospirillum photometricum (Rhodospirillum photometricum), this protein is Reaction center protein M chain (pufM).